The following is a 269-amino-acid chain: MGSLANNIMVVGAVLAALVVGGSCGPPKVPPGPNITTNYNGKWLTARATWYGQPNGAGAPDNGGACGIKNVNLPPYSGMTACGNVPIFKDGKGCGSCYEVRCKEKPECSGNPVTVFITDMNYEPIAPYHFDLSGKAFGSLAKPGLNDKLRHCGIMDVEFRRVRCKYPAGQKIVFHIEKGCNPNYVAVLVKFVADDGDIVLMEIQDKLSAEWKPMKLSWGAIWRMDTAKALKGPFSIRLTSESGKKVIAKDIIPANWRPDAVYTSNVQFY.

An N-terminal signal peptide occupies residues 1 to 24 (MGSLANNIMVVGAVLAALVVGGSC). An N-linked (GlcNAc...) asparagine glycan is attached at N34. Residues 63-169 (GGACGIKNVN…RRVRCKYPAG (107 aa)) form the Expansin-like EG45 domain. Disulfide bonds link C66-C94, C97-C164, and C102-C108. The Expansin-like CBD domain maps to 183-264 (NYVAVLVKFV…NWRPDAVYTS (82 aa)).

Belongs to the expansin family. Expansin B subfamily. Expressed in anthers and pollen.

It localises to the secreted. It is found in the cell wall. The protein resides in the membrane. In terms of biological role, may aid fertilization by loosening the cell wall of the stigma and style, thereby facilitating penetration of the pollen tube. Acts selectively on grass cell walls, which are relatively poor in pectins and xyloglucans and rich in glucuronoarabinoxylans and (1-3),(1-4)-beta-D-glucans, when compared with cell walls of other angiosperms, including other monocots. The protein is Expansin-B9 (EXPB9) of Zea mays (Maize).